The following is a 286-amino-acid chain: NAD kinase (286 aa).

Aspartate 74 acts as the Proton acceptor in catalysis. Residues 74–75, 148–149, aspartate 178, alanine 186, 189–194, and glutamine 244 contribute to the NAD(+) site; these read DG, ND, and TAYNLS.

This sequence belongs to the NAD kinase family. A divalent metal cation serves as cofactor.

Its subcellular location is the cytoplasm. The catalysed reaction is NAD(+) + ATP = ADP + NADP(+) + H(+). In terms of biological role, involved in the regulation of the intracellular balance of NAD and NADP, and is a key enzyme in the biosynthesis of NADP. Catalyzes specifically the phosphorylation on 2'-hydroxyl of the adenosine moiety of NAD to yield NADP. The polypeptide is NAD kinase (Campylobacter jejuni subsp. jejuni serotype O:23/36 (strain 81-176)).